Here is a 150-residue protein sequence, read N- to C-terminus: Ribonuclease H (150 aa).

Positions Met-1–Thr-141 constitute an RNase H type-1 domain. The Mg(2+) site is built by Asp-9, Glu-47, Asp-69, and Asp-133.

Belongs to the RNase H family. As to quaternary structure, monomer. The cofactor is Mg(2+).

It is found in the cytoplasm. It catalyses the reaction Endonucleolytic cleavage to 5'-phosphomonoester.. In terms of biological role, endonuclease that specifically degrades the RNA of RNA-DNA hybrids. This chain is Ribonuclease H, found in Rhodopseudomonas palustris (strain BisB5).